Consider the following 364-residue polypeptide: Pre-small/secreted glycoprotein (364 aa).

Positions 1-32 are cleaved as a signal peptide; that stretch reads MGVTGILQLPRDRFKRTSFFLWVIILFQRTFS. The N-linked (GlcNAc...) asparagine; by host glycan is linked to Asn40. Disulfide bonds link Cys108–Cys135 and Cys121–Cys147. N-linked (GlcNAc...) asparagine; by host glycosylation is found at Asn204, Asn228, Asn238, Asn257, and Asn268.

The protein belongs to the filoviruses glycoprotein family. In terms of assembly, homodimer; disulfide-linked. The homodimers are linked by two disulfide bonds in a parallel orientation. As to quaternary structure, monomer. This precursor is processed into mature sGP and delta-peptide by host furin or furin-like proteases. The cleavage site corresponds to the furin optimal cleavage sequence [KR]-X-[KR]-R. In terms of processing, N-glycosylated. Post-translationally, O-glycosylated.

The protein localises to the secreted. Its function is as follows. Seems to possess an anti-inflammatory activity as it can reverse the barrier-decreasing effects of TNF alpha. Might therefore contribute to the lack of inflammatory reaction seen during infection in spite the of extensive necrosis and massive virus production. Does not seem to be involved in activation of primary macrophages. Does not seem to interact specifically with neutrophils. Functionally, viroporin that permeabilizes mammalian cell plasma membranes. It acts by altering permeation of ionic compounds and small molecules. This activity may lead to viral enterotoxic activity. The protein is Pre-small/secreted glycoprotein (GP) of Zaire ebolavirus (strain Eckron-76) (ZEBOV).